Consider the following 337-residue polypeptide: Fructose-1,6-bisphosphatase class 1 (337 aa).

Mg(2+) contacts are provided by Glu94, Asp116, Leu118, and Asp119. Residues 119 to 122, Asn210, and Lys276 each bind substrate; that span reads DGSS. Glu282 serves as a coordination point for Mg(2+).

The protein belongs to the FBPase class 1 family. Homotetramer. It depends on Mg(2+) as a cofactor.

The protein localises to the cytoplasm. It catalyses the reaction beta-D-fructose 1,6-bisphosphate + H2O = beta-D-fructose 6-phosphate + phosphate. It participates in carbohydrate biosynthesis; gluconeogenesis. The chain is Fructose-1,6-bisphosphatase class 1 from Burkholderia vietnamiensis (strain G4 / LMG 22486) (Burkholderia cepacia (strain R1808)).